Here is a 260-residue protein sequence, read N- to C-terminus: Flap endonuclease Xni (260 aa).

Position 105 (Asp-105) interacts with Mg(2+). The region spanning 164-254 is the 5'-3' exonuclease domain; that stretch reads SQFLDLLALA…LKDFRVNGPA (91 aa). K(+)-binding residues include Leu-172, Ala-173, Pro-181, Ile-183, and Ile-186. The interval 185–190 is interaction with DNA; it reads GIGPKS.

It belongs to the Xni family. Requires Mg(2+) as cofactor. K(+) is required as a cofactor.

Functionally, has flap endonuclease activity. During DNA replication, flap endonucleases cleave the 5'-overhanging flap structure that is generated by displacement synthesis when DNA polymerase encounters the 5'-end of a downstream Okazaki fragment. The chain is Flap endonuclease Xni from Shewanella sp. (strain ANA-3).